Here is a 392-residue protein sequence, read N- to C-terminus: S-adenosylmethionine synthase (392 aa).

His-17 provides a ligand contact to ATP. Asp-19 contributes to the Mg(2+) binding site. Glu-45 contacts K(+). L-methionine-binding residues include Glu-58 and Gln-102. Positions 102–112 (QSADIAQGVDA) are flexible loop. ATP is bound by residues 169 to 171 (DAK), 235 to 236 (KF), Asp-244, 250 to 251 (RK), Ala-267, and Lys-271. L-methionine is bound at residue Asp-244. Lys-275 contacts L-methionine.

This sequence belongs to the AdoMet synthase family. As to quaternary structure, homotetramer; dimer of dimers. The cofactor is Mg(2+). K(+) serves as cofactor.

It localises to the cytoplasm. It carries out the reaction L-methionine + ATP + H2O = S-adenosyl-L-methionine + phosphate + diphosphate. Its pathway is amino-acid biosynthesis; S-adenosyl-L-methionine biosynthesis; S-adenosyl-L-methionine from L-methionine: step 1/1. Catalyzes the formation of S-adenosylmethionine (AdoMet) from methionine and ATP. The overall synthetic reaction is composed of two sequential steps, AdoMet formation and the subsequent tripolyphosphate hydrolysis which occurs prior to release of AdoMet from the enzyme. This is S-adenosylmethionine synthase from Methylobacterium radiotolerans (strain ATCC 27329 / DSM 1819 / JCM 2831 / NBRC 15690 / NCIMB 10815 / 0-1).